A 393-amino-acid polypeptide reads, in one-letter code: MTTIGTPLTPKATKVMMLGSGELGKEVVIELQRLGVEVIAVDRYANAPAQQVAHRAYTISMLDGEALKALVEKEKPDYIVPEVEAIATATLVELEQAGFTVIPTAKATQLTMNREGIRRLAAEELGLPTSNYQFVDNFDDFKRAVEKIGIPCVVKPIMSSSGHGQSILKSVEQIPSAWEYAQQGGRAGAGRVIVEGFVKFDYEITLLTVRHVHGTSFLAPIGHIQIDGDYRESWQPQAMSAVALEKAQAIAEKITGALGGRGIFGVEMFVCGDEVIFNEVSPRPHDTGMVTLISQELSEFALHARAILGLPIPDITLISPSASKAIVVEGKSTQVVFGQLAEVLAEPHTNLRLFGKGEVDGHRRMGVILARDISVEKALEKARRAYDKLEIAL.

N(1)-(5-phospho-beta-D-ribosyl)glycinamide is bound by residues 22-23 and E82; that span reads EL. ATP is bound by residues R114, K155, 160–165, 195–198, and E203; these read SSGHGQ and EGFV. An ATP-grasp domain is found at 119–308; sequence RLAAEELGLP…EFALHARAIL (190 aa). 2 residues coordinate Mg(2+): E267 and E279. Residues D286, K356, and 363-364 contribute to the N(1)-(5-phospho-beta-D-ribosyl)glycinamide site; that span reads RR.

Belongs to the PurK/PurT family. As to quaternary structure, homodimer.

The catalysed reaction is N(1)-(5-phospho-beta-D-ribosyl)glycinamide + formate + ATP = N(2)-formyl-N(1)-(5-phospho-beta-D-ribosyl)glycinamide + ADP + phosphate + H(+). The protein operates within purine metabolism; IMP biosynthesis via de novo pathway; N(2)-formyl-N(1)-(5-phospho-D-ribosyl)glycinamide from N(1)-(5-phospho-D-ribosyl)glycinamide (formate route): step 1/1. In terms of biological role, involved in the de novo purine biosynthesis. Catalyzes the transfer of formate to 5-phospho-ribosyl-glycinamide (GAR), producing 5-phospho-ribosyl-N-formylglycinamide (FGAR). Formate is provided by PurU via hydrolysis of 10-formyl-tetrahydrofolate. The polypeptide is Formate-dependent phosphoribosylglycinamide formyltransferase (Pasteurella multocida (strain Pm70)).